Here is a 121-residue protein sequence, read N- to C-terminus: Dihydroneopterin aldolase (121 aa).

Residues Glu16 and Met111 each contribute to the substrate site.

Belongs to the archaeal dihydroneopterin aldolase family. Homotetramer.

The enzyme catalyses 7,8-dihydroneopterin = 6-hydroxymethyl-7,8-dihydropterin + glycolaldehyde. The protein operates within cofactor biosynthesis; 5,6,7,8-tetrahydromethanopterin biosynthesis. Functionally, catalyzes the conversion of 7,8-dihydroneopterin (H2Neo) to 6-hydroxymethyl-7,8-dihydropterin (6-HMD). This Methanopyrus kandleri (strain AV19 / DSM 6324 / JCM 9639 / NBRC 100938) protein is Dihydroneopterin aldolase.